A 324-amino-acid chain; its full sequence is Anthranilate phosphoribosyltransferase (324 aa).

5-phospho-alpha-D-ribose 1-diphosphate is bound by residues G75, 78 to 79 (GD), T83, 85 to 88 (NVST), 102 to 110 (KHGNFGITG), and S114. G75 contributes to the anthranilate binding site. S87 lines the Mg(2+) pocket. N105 provides a ligand contact to anthranilate. R160 contacts anthranilate. Residues D216 and E217 each coordinate Mg(2+).

Belongs to the anthranilate phosphoribosyltransferase family. In terms of assembly, homodimer. Mg(2+) serves as cofactor.

The enzyme catalyses N-(5-phospho-beta-D-ribosyl)anthranilate + diphosphate = 5-phospho-alpha-D-ribose 1-diphosphate + anthranilate. Its pathway is amino-acid biosynthesis; L-tryptophan biosynthesis; L-tryptophan from chorismate: step 2/5. Its function is as follows. Catalyzes the transfer of the phosphoribosyl group of 5-phosphorylribose-1-pyrophosphate (PRPP) to anthranilate to yield N-(5'-phosphoribosyl)-anthranilate (PRA). The protein is Anthranilate phosphoribosyltransferase of Picrophilus torridus (strain ATCC 700027 / DSM 9790 / JCM 10055 / NBRC 100828 / KAW 2/3).